A 295-amino-acid chain; its full sequence is 4-hydroxybenzoate octaprenyltransferase (295 aa).

The next 8 membrane-spanning stretches (helical) occupy residues 28 to 48, 51 to 71, 101 to 121, 124 to 144, 159 to 179, 220 to 240, 242 to 262, and 274 to 294; these read AGWL…AGGF, WHLL…GCCV, ALGV…TTNA, IAWS…KRFV, IPMA…WLVL, VMAF…PFGL, WPLH…WRLI, and FTGN…GFAL.

Belongs to the UbiA prenyltransferase family. The cofactor is Mg(2+).

The protein resides in the cell inner membrane. The enzyme catalyses all-trans-octaprenyl diphosphate + 4-hydroxybenzoate = 4-hydroxy-3-(all-trans-octaprenyl)benzoate + diphosphate. It participates in cofactor biosynthesis; ubiquinone biosynthesis. Functionally, catalyzes the prenylation of para-hydroxybenzoate (PHB) with an all-trans polyprenyl group. Mediates the second step in the final reaction sequence of ubiquinone-8 (UQ-8) biosynthesis, which is the condensation of the polyisoprenoid side chain with PHB, generating the first membrane-bound Q intermediate 3-octaprenyl-4-hydroxybenzoate. In Paracidovorax citrulli (strain AAC00-1) (Acidovorax citrulli), this protein is 4-hydroxybenzoate octaprenyltransferase.